Here is a 987-residue protein sequence, read N- to C-terminus: ATP-dependent 6-phosphofructokinase subunit alpha (987 aa).

The segment at 1-580 is N-terminal catalytic PFK domain 1; the sequence is MQSQDSCYGV…LYENFLSTTV (580 aa). Ser3 is modified (phosphoserine). Lys89 participates in a covalent cross-link: Glycyl lysine isopeptide (Lys-Gly) (interchain with G-Cter in ubiquitin). 5 positions are modified to phosphoserine: Ser166, Ser179, Ser185, Ser189, and Ser192. Gly215 is a binding site for ATP. At Ser217 the chain carries Phosphoserine. ATP contacts are provided by residues 278–279 and 308–311; these read RS and GDGS. Residue Asp309 participates in Mg(2+) binding. Beta-D-fructose 6-phosphate-binding positions include 354–356, Arg391, and 398–400; these read SID and MGR. The active-site Proton acceptor is Asp356. Position 450 is a phosphothreonine (Thr450). Residues Glu455, Lys482, and 488 to 491 contribute to the beta-D-fructose 6-phosphate site; that span reads HVQR. The tract at residues 581-594 is interdomain linker; that stretch reads KDDGSELLPVSDRL. The interval 595 to 987 is C-terminal regulatory PFK domain 2; the sequence is NIGIVHVGAP…EVAALAAENK (393 aa). A Glycyl lysine isopeptide (Lys-Gly) (interchain with G-Cter in ubiquitin) cross-link involves residue Lys625. Beta-D-fructose 2,6-bisphosphate-binding positions include Arg665, 722–726, Arg760, 767–769, Glu827, Arg853, 859–862, and Arg952; these read TVSNN, QGG, and HVQQ.

This sequence belongs to the phosphofructokinase type A (PFKA) family. ATP-dependent PFK group I subfamily. Eukaryotic two domain clade 'E' sub-subfamily. Heterooctamer of 4 alpha and 4 beta chains. The cofactor is Mg(2+).

It is found in the cytoplasm. Its subcellular location is the mitochondrion outer membrane. The enzyme catalyses beta-D-fructose 6-phosphate + ATP = beta-D-fructose 1,6-bisphosphate + ADP + H(+). It functions in the pathway carbohydrate degradation; glycolysis; D-glyceraldehyde 3-phosphate and glycerone phosphate from D-glucose: step 3/4. Its activity is regulated as follows. Allosterically activated by ADP, AMP, or fructose 2,6-bisphosphate, and allosterically inhibited by ATP or citrate. Its function is as follows. Catalyzes the phosphorylation of D-fructose 6-phosphate to fructose 1,6-bisphosphate by ATP, the first committing step of glycolysis. This chain is ATP-dependent 6-phosphofructokinase subunit alpha (PFK1), found in Saccharomyces cerevisiae (strain ATCC 204508 / S288c) (Baker's yeast).